A 359-amino-acid chain; its full sequence is Probable dual-specificity RNA methyltransferase RlmN (359 aa).

Catalysis depends on Glu-91, which acts as the Proton acceptor. A Radical SAM core domain is found at 97–329 (QHYGHSVCVT…KKNGVNCVVR (233 aa)). Cys-104 and Cys-340 are disulfide-bonded. 3 residues coordinate [4Fe-4S] cluster: Cys-111, Cys-115, and Cys-118. S-adenosyl-L-methionine is bound by residues 163-164 (GE), Ser-195, 218-220 (SLH), and Asn-296. Cys-340 functions as the S-methylcysteine intermediate in the catalytic mechanism.

It belongs to the radical SAM superfamily. RlmN family. The cofactor is [4Fe-4S] cluster.

It localises to the cytoplasm. The catalysed reaction is adenosine(2503) in 23S rRNA + 2 reduced [2Fe-2S]-[ferredoxin] + 2 S-adenosyl-L-methionine = 2-methyladenosine(2503) in 23S rRNA + 5'-deoxyadenosine + L-methionine + 2 oxidized [2Fe-2S]-[ferredoxin] + S-adenosyl-L-homocysteine. It carries out the reaction adenosine(37) in tRNA + 2 reduced [2Fe-2S]-[ferredoxin] + 2 S-adenosyl-L-methionine = 2-methyladenosine(37) in tRNA + 5'-deoxyadenosine + L-methionine + 2 oxidized [2Fe-2S]-[ferredoxin] + S-adenosyl-L-homocysteine. Its function is as follows. Specifically methylates position 2 of adenine 2503 in 23S rRNA and position 2 of adenine 37 in tRNAs. The protein is Probable dual-specificity RNA methyltransferase RlmN of Streptococcus pyogenes serotype M3 (strain ATCC BAA-595 / MGAS315).